Reading from the N-terminus, the 161-residue chain is Small ribosomal subunit protein bS6 (161 aa).

The interval 107–161 (KGDERERGFRGPKPAGRFESGRGGAGGARRGYDDREEFRARNEREDGRDTDGEAE) is disordered. Positions 136-161 (RGYDDREEFRARNEREDGRDTDGEAE) are enriched in basic and acidic residues.

This sequence belongs to the bacterial ribosomal protein bS6 family.

Binds together with bS18 to 16S ribosomal RNA. This Gluconacetobacter diazotrophicus (strain ATCC 49037 / DSM 5601 / CCUG 37298 / CIP 103539 / LMG 7603 / PAl5) protein is Small ribosomal subunit protein bS6.